The following is a 157-amino-acid chain: Ribonuclease H (157 aa).

One can recognise an RNase H type-1 domain in the interval 3-144 (ELKQLYIFTD…CDVLARKAAE (142 aa)). Mg(2+)-binding residues include D12, E50, D72, and D136.

Belongs to the RNase H family. In terms of assembly, monomer. The cofactor is Mg(2+).

It localises to the cytoplasm. It carries out the reaction Endonucleolytic cleavage to 5'-phosphomonoester.. Functionally, endonuclease that specifically degrades the RNA of RNA-DNA hybrids. This chain is Ribonuclease H, found in Shewanella frigidimarina (strain NCIMB 400).